A 352-amino-acid chain; its full sequence is N-acetyl-gamma-glutamyl-phosphate reductase (352 aa).

The active site involves Cys155.

This sequence belongs to the NAGSA dehydrogenase family. Type 1 subfamily.

It localises to the cytoplasm. It carries out the reaction N-acetyl-L-glutamate 5-semialdehyde + phosphate + NADP(+) = N-acetyl-L-glutamyl 5-phosphate + NADPH + H(+). Its pathway is amino-acid biosynthesis; L-arginine biosynthesis; N(2)-acetyl-L-ornithine from L-glutamate: step 3/4. Its function is as follows. Catalyzes the NADPH-dependent reduction of N-acetyl-5-glutamyl phosphate to yield N-acetyl-L-glutamate 5-semialdehyde. The protein is N-acetyl-gamma-glutamyl-phosphate reductase of Gloeothece citriformis (strain PCC 7424) (Cyanothece sp. (strain PCC 7424)).